The chain runs to 182 residues: Ferritin heavy chain (182 aa).

At M1 the chain carries N-acetylmethionine. T2 carries the N-acetylthreonine; in Ferritin heavy chain, N-terminally processed modification. One can recognise a Ferritin-like diiron domain in the interval Q11 to G160. Fe cation contacts are provided by E28, E63, H66, E108, and Q142.

Belongs to the ferritin family. As to quaternary structure, oligomer of 24 subunits. There are two types of subunits: L (light) chain and H (heavy) chain. The major chain can be light or heavy, depending on the species and tissue type. The functional molecule forms a roughly spherical shell with a diameter of 12 nm and contains a central cavity into which the insoluble mineral iron core is deposited. Interacts with NCOA4; NCOA4 promotes targeting of the iron-binding ferritin complex to autolysosomes following starvation or iron depletion.

The protein resides in the cytoplasm. It localises to the cytoplasmic vesicle. It is found in the autophagosome. Its subcellular location is the autolysosome. The catalysed reaction is 4 Fe(2+) + O2 + 4 H(+) = 4 Fe(3+) + 2 H2O. Its function is as follows. Stores iron in a soluble, non-toxic, readily available form. Important for iron homeostasis. Has ferroxidase activity. Iron is taken up in the ferrous form and deposited as ferric hydroxides after oxidation. Also plays a role in delivery of iron to cells. Mediates iron uptake in capsule cells of the developing kidney. Degraded to release iron upon autophagy activation by nutrient starvation. The polypeptide is Ferritin heavy chain (Fth1) (Mus musculus (Mouse)).